The following is a 208-amino-acid chain: Guanylate kinase (208 aa).

One can recognise a Guanylate kinase-like domain in the interval 5 to 184; that stretch reads GLLIVFSGPS…AAERVKCVIE (180 aa). Residue 12 to 19 coordinates ATP; the sequence is GPSGVGKG.

It belongs to the guanylate kinase family.

The protein resides in the cytoplasm. It carries out the reaction GMP + ATP = GDP + ADP. Its function is as follows. Essential for recycling GMP and indirectly, cGMP. This Streptococcus pneumoniae serotype 4 (strain ATCC BAA-334 / TIGR4) protein is Guanylate kinase.